Here is a 214-residue protein sequence, read N- to C-terminus: Inner membrane-spanning protein YciB (214 aa).

5 helical membrane passes run 11–31, 50–70, 81–101, 119–139, and 149–169; these read ILFFIAFKLYGIYVATAVAII, MHIITLALIVILGGATLILQD, VNWGFALVFLGSHFIGQKPII, LSYMWIAFFIFSGIANIYVAY, and FKLFGLMGLTLAFILIQGVYI.

This sequence belongs to the YciB family.

Its subcellular location is the cell inner membrane. In terms of biological role, plays a role in cell envelope biogenesis, maintenance of cell envelope integrity and membrane homeostasis. The sequence is that of Inner membrane-spanning protein YciB from Hydrogenovibrio crunogenus (strain DSM 25203 / XCL-2) (Thiomicrospira crunogena).